The chain runs to 263 residues: Tetraspanin-7 (263 aa).

Residues 1–7 are Cytoplasmic-facing; sequence MVQCSNN. Residues 8–28 traverse the membrane as a helical segment; it reads LLGILNFFTFLLSIPILSAGI. The Extracellular segment spans residues 29–45; sequence WLGKNAATECERFLDKP. Residues 46–66 form a helical membrane-spanning segment; that stretch reads MVVLGIFLMFVSIAGLVGACC. Residues 67-75 lie on the Cytoplasmic side of the membrane; the sequence is RVSCLLWLY. Residues 76–96 form a helical membrane-spanning segment; sequence LFAMFLLILLGFCFTIFAFAV. Over 97 to 234 the chain is Extracellular; it reads TNRGAGEVIS…NIKNSWKKVA (138 aa). Asn180 is a glycosylation site (N-linked (GlcNAc...) asparagine). The helical transmembrane segment at 235–255 threads the bilayer; that stretch reads KVNIVFLIFLIIVYSVGCCAF. Over 256–263 the chain is Cytoplasmic; the sequence is RNNRKRSW.

Belongs to the tetraspanin (TM4SF) family.

It is found in the membrane. In terms of biological role, may be involved in the regulation of cell differentiation. The sequence is that of Tetraspanin-7 (TET7) from Arabidopsis thaliana (Mouse-ear cress).